Here is a 297-residue protein sequence, read N- to C-terminus: Probable terminal-alkyne amino-acid exporter (297 aa).

9 helical membrane passes run 6 to 26 (AVWA…AIRV), 32 to 52 (GVAG…AIAA), 65 to 85 (LPMI…LLNW), 95 to 115 (ASLL…VFLG), 123 to 143 (IAGS…GGHA), 150 to 170 (WVVL…KPLL), 178 to 198 (VACY…PAMV), 212 to 232 (TVYL…YAVA), and 249 to 269 (VALV…ALVG). EamA domains lie at 6–137 (AVWA…AVIA) and 150–281 (WVVL…MLIN).

The protein belongs to the EamA transporter family.

Its subcellular location is the cell membrane. In terms of biological role, probably involved in the export of terminal alkyne-containing amino acids, namely L-propargylglycine (Pra) and L-beta-ethynylserine, that are antibiotics synthesized by enzymes encoded in the same gene cluster. This chain is Probable terminal-alkyne amino-acid exporter, found in Streptantibioticus cattleyicolor (strain ATCC 35852 / DSM 46488 / JCM 4925 / NBRC 14057 / NRRL 8057) (Streptomyces cattleya).